Consider the following 100-residue polypeptide: NADH-quinone oxidoreductase subunit K 2 (100 aa).

3 helical membrane passes run 2-22, 29-49, and 61-81; these read LAIE…TIGV, IVIF…FIAF, and FVFF…ALMI.

It belongs to the complex I subunit 4L family. NDH-1 is composed of 14 different subunits. Subunits NuoA, H, J, K, L, M, N constitute the membrane sector of the complex.

Its subcellular location is the cell inner membrane. It catalyses the reaction a quinone + NADH + 5 H(+)(in) = a quinol + NAD(+) + 4 H(+)(out). Functionally, NDH-1 shuttles electrons from NADH, via FMN and iron-sulfur (Fe-S) centers, to quinones in the respiratory chain. The immediate electron acceptor for the enzyme in this species is believed to be ubiquinone. Couples the redox reaction to proton translocation (for every two electrons transferred, four hydrogen ions are translocated across the cytoplasmic membrane), and thus conserves the redox energy in a proton gradient. This is NADH-quinone oxidoreductase subunit K 2 from Citrifermentans bemidjiense (strain ATCC BAA-1014 / DSM 16622 / JCM 12645 / Bem) (Geobacter bemidjiensis).